Consider the following 419-residue polypeptide: Putative zinc metalloprotease SP_0263 (419 aa).

Zn(2+) is bound at residue His18. Residue Glu19 is part of the active site. His22 contacts Zn(2+). The next 3 membrane-spanning stretches (helical) occupy residues 169 to 191, 345 to 367, and 388 to 410; these read LITN…WVLI, ILYF…IPAL, and EIET…AVTW.

It belongs to the peptidase M50B family. Requires Zn(2+) as cofactor.

The protein localises to the cell membrane. The chain is Putative zinc metalloprotease SP_0263 from Streptococcus pneumoniae serotype 4 (strain ATCC BAA-334 / TIGR4).